A 186-amino-acid polypeptide reads, in one-letter code: Peptide deformylase (186 aa).

2 residues coordinate Fe cation: Cys99 and His141. The active site involves Glu142. His145 is a binding site for Fe cation.

It belongs to the polypeptide deformylase family. The cofactor is Fe(2+).

The catalysed reaction is N-terminal N-formyl-L-methionyl-[peptide] + H2O = N-terminal L-methionyl-[peptide] + formate. Its function is as follows. Removes the formyl group from the N-terminal Met of newly synthesized proteins. Requires at least a dipeptide for an efficient rate of reaction. N-terminal L-methionine is a prerequisite for activity but the enzyme has broad specificity at other positions. This chain is Peptide deformylase, found in Chlamydia pneumoniae (Chlamydophila pneumoniae).